A 554-amino-acid chain; its full sequence is Trichloroethene reductive dehalogenase (554 aa).

Residues 1–42 (MSEKYHSTVTRRDFMKRLGLAGAGAGALGAAVLAENNLPHEF) constitute a signal peptide (tat-type signal). 2 consecutive 4Fe-4S ferredoxin-type domains span residues 425-457 (PTKP…HEGP) and 471-500 (EGWH…NNSW). [4Fe-4S] cluster contacts are provided by Cys437, Cys440, Cys443, Cys447, Cys480, Cys483, Cys486, and Cys490.

It belongs to the PceA family. The cofactor is [4Fe-4S] cluster. Requires corrinoid as cofactor. In terms of processing, predicted to be exported by the Tat system. The position of the signal peptide cleavage has been experimentally proven.

It is found in the cell membrane. It carries out the reaction trichloroethene + AH2 = (Z)-1,2-dichloroethene + chloride + A + H(+). It catalyses the reaction (Z)-1,2-dichloroethene + AH2 = chloroethene + chloride + A + H(+). The catalysed reaction is 1,1-dichloroethene + AH2 = chloroethene + chloride + A + H(+). Loses 93% of its activity upon incubation with 1-iodopropane and titanium(III) citrate in the dark. Subsequent exposure to light restores 80% of the original activity. Completely inhibited by 2 mM sodium sulfite or sodium dithionite, and by 1 mM cuprous chloride. In terms of biological role, catalyzes the reductive dechlorination of trichloroethene (TCE) to cis-1,2-dichloroethene (DCE) and of cis-1,2-dichloroethene to chloroethene. The substrate specificity is broad, and the enzyme can dehalogenate various substrates, including 1,1-dichloroethene (1,1-DCE), 1,2-dichloroethane and 1,2-dibromoethane. A variety of other haloalkanes and haloalkenes containing three to five carbon atoms are dehalogenated at lower rates. Trans-1,2-dichloroethene (trans-DCE) and chloroethene are degraded at rates which are approximately 2 orders of magnitude lower. Titanium(III) citrate and methyl viologen can be used as reductants. The sequence is that of Trichloroethene reductive dehalogenase from Dehalococcoides mccartyi (strain ATCC BAA-2266 / KCTC 15142 / 195) (Dehalococcoides ethenogenes (strain 195)).